The sequence spans 406 residues: Serine hydroxymethyltransferase (406 aa).

(6S)-5,6,7,8-tetrahydrofolate is bound by residues L111 and 115–117 (GHL). Residue K220 is modified to N6-(pyridoxal phosphate)lysine. 340–342 (SAF) is a (6S)-5,6,7,8-tetrahydrofolate binding site.

Belongs to the SHMT family. In terms of assembly, homodimer. The cofactor is pyridoxal 5'-phosphate.

Its subcellular location is the cytoplasm. It catalyses the reaction (6R)-5,10-methylene-5,6,7,8-tetrahydrofolate + glycine + H2O = (6S)-5,6,7,8-tetrahydrofolate + L-serine. The protein operates within one-carbon metabolism; tetrahydrofolate interconversion. It functions in the pathway amino-acid biosynthesis; glycine biosynthesis; glycine from L-serine: step 1/1. Functionally, catalyzes the reversible interconversion of serine and glycine with tetrahydrofolate (THF) serving as the one-carbon carrier. This reaction serves as the major source of one-carbon groups required for the biosynthesis of purines, thymidylate, methionine, and other important biomolecules. Also exhibits THF-independent aldolase activity toward beta-hydroxyamino acids, producing glycine and aldehydes, via a retro-aldol mechanism. The chain is Serine hydroxymethyltransferase from Mycoplasma genitalium (strain ATCC 33530 / DSM 19775 / NCTC 10195 / G37) (Mycoplasmoides genitalium).